A 337-amino-acid polypeptide reads, in one-letter code: Putative 2-aminoethylphosphonate-binding periplasmic protein (337 aa).

The signal sequence occupies residues 1–21; the sequence is MKLSRLALLSVFALASAPSWA.

Belongs to the bacterial solute-binding protein 1 family.

The protein resides in the periplasm. Its function is as follows. Probably part of the PhnSTUV complex (TC 3.A.1.11.5) involved in 2-aminoethylphosphonate import. The polypeptide is Putative 2-aminoethylphosphonate-binding periplasmic protein (phnS) (Salmonella typhi).